The primary structure comprises 840 residues: Probable inorganic carbon transporter subunit DabA 2 (840 aa).

Positions 356, 358, 540, and 555 each coordinate Zn(2+).

It belongs to the inorganic carbon transporter (TC 9.A.2) DabA family. In terms of assembly, forms a complex with DabB. Zn(2+) is required as a cofactor.

Its subcellular location is the cell inner membrane. In terms of biological role, part of an energy-coupled inorganic carbon pump. The protein is Probable inorganic carbon transporter subunit DabA 2 of Bradyrhizobium sp. (strain ORS 278).